A 379-amino-acid polypeptide reads, in one-letter code: MHVTQEQVMMRKMVRDFARKEIAPAAEIMEKTDEFPFQLIKKMGKHGLMGIPVPEQYGGAGADVVSYILAIHEISRISAAVGVILSVHTSVGTNPILYFGNEEQKMKYIPNLASGDHLGAFALTEPHSGSDAGSLRTTAIKKNGKYLLNGSKIFITNGGAADIYITFALTAPDQGRHGISAFIVEKNTPGFTVGKKERKLGLYGSNTTELIFDNAEVPEANLLGKEGDGFHIAMANLNVGRIGIAAQALGIAEAALEHAVDYAKQRVQFGRPIAANQGISFKLADMATRAEAARHLVYHAADLHNRGLNCGKEASMAKQFASDAAVKAALDAVQIYGGYGYMKDYPVERLLRDAKVTQIYEGTNEIQRLIISKYLLGGT.

This sequence belongs to the acyl-CoA dehydrogenase family. It depends on FAD as a cofactor.

It catalyses the reaction a 2,3-saturated acyl-CoA + A = a 2,3-dehydroacyl-CoA + AH2. The polypeptide is Acyl-CoA dehydrogenase (mmgC) (Bacillus subtilis (strain 168)).